The chain runs to 422 residues: Probable protein phosphatase 2C 69 (422 aa).

Residues 45 to 294 (TLLLAEAGER…DDTTCIVVDI (250 aa)) enclose the PPM-type phosphatase domain. Mn(2+)-binding residues include Asp70, Gly71, Asp246, and Asp285.

Belongs to the PP2C family. Mg(2+) is required as a cofactor. It depends on Mn(2+) as a cofactor.

The catalysed reaction is O-phospho-L-seryl-[protein] + H2O = L-seryl-[protein] + phosphate. It catalyses the reaction O-phospho-L-threonyl-[protein] + H2O = L-threonyl-[protein] + phosphate. This Oryza sativa subsp. japonica (Rice) protein is Probable protein phosphatase 2C 69.